The chain runs to 179 residues: Large ribosomal subunit protein uL5 (179 aa).

It belongs to the universal ribosomal protein uL5 family. In terms of assembly, part of the 50S ribosomal subunit; part of the 5S rRNA/L5/L18/L25 subcomplex. Contacts the 5S rRNA and the P site tRNA. Forms a bridge to the 30S subunit in the 70S ribosome.

In terms of biological role, this is one of the proteins that bind and probably mediate the attachment of the 5S RNA into the large ribosomal subunit, where it forms part of the central protuberance. In the 70S ribosome it contacts protein S13 of the 30S subunit (bridge B1b), connecting the 2 subunits; this bridge is implicated in subunit movement. Contacts the P site tRNA; the 5S rRNA and some of its associated proteins might help stabilize positioning of ribosome-bound tRNAs. In Prochlorococcus marinus (strain MIT 9301), this protein is Large ribosomal subunit protein uL5.